The sequence spans 61 residues: MAKKSMIAKAARAPKFKVRGYTRCQICGRPHSVYKDFGICRVCLRKMANEGLIPGLKKASW.

Positions 24, 27, 40, and 43 each coordinate Zn(2+).

It belongs to the universal ribosomal protein uS14 family. Zinc-binding uS14 subfamily. Part of the 30S ribosomal subunit. Contacts proteins S3 and S10. Requires Zn(2+) as cofactor.

Functionally, binds 16S rRNA, required for the assembly of 30S particles and may also be responsible for determining the conformation of the 16S rRNA at the A site. The sequence is that of Small ribosomal subunit protein uS14 from Campylobacter curvus (strain 525.92).